The chain runs to 283 residues: Formamidopyrimidine-DNA glycosylase (283 aa).

The active-site Schiff-base intermediate with DNA is Pro2. Glu3 acts as the Proton donor in catalysis. Lys60 serves as the catalytic Proton donor; for beta-elimination activity. Positions 100, 119, and 164 each coordinate DNA. Residues 249–283 (WVYNRAGEPCKVCGDVIQRIKLGGRSSHFCRQCQV) form an FPG-type zinc finger. The active-site Proton donor; for delta-elimination activity is the Arg273.

Belongs to the FPG family. In terms of assembly, monomer. Requires Zn(2+) as cofactor.

The catalysed reaction is Hydrolysis of DNA containing ring-opened 7-methylguanine residues, releasing 2,6-diamino-4-hydroxy-5-(N-methyl)formamidopyrimidine.. It carries out the reaction 2'-deoxyribonucleotide-(2'-deoxyribose 5'-phosphate)-2'-deoxyribonucleotide-DNA = a 3'-end 2'-deoxyribonucleotide-(2,3-dehydro-2,3-deoxyribose 5'-phosphate)-DNA + a 5'-end 5'-phospho-2'-deoxyribonucleoside-DNA + H(+). In terms of biological role, involved in base excision repair of DNA damaged by oxidation or by mutagenic agents. Acts as a DNA glycosylase that recognizes and removes damaged bases. Has a preference for oxidized purines, such as 7,8-dihydro-8-oxoguanine (8-oxoG). Has AP (apurinic/apyrimidinic) lyase activity and introduces nicks in the DNA strand. Cleaves the DNA backbone by beta-delta elimination to generate a single-strand break at the site of the removed base with both 3'- and 5'-phosphates. In Nostoc sp. (strain PCC 7120 / SAG 25.82 / UTEX 2576), this protein is Formamidopyrimidine-DNA glycosylase.